We begin with the raw amino-acid sequence, 394 residues long: Ketoisovalerate oxidoreductase subunit VorA (394 aa).

As to quaternary structure, heterotetramer of one alpha, one beta, one delta and one gamma chain.

It carries out the reaction 3-methyl-2-oxobutanoate + 2 oxidized [2Fe-2S]-[ferredoxin] + CoA = 2-methylpropanoyl-CoA + 2 reduced [2Fe-2S]-[ferredoxin] + CO2 + H(+). The protein is Ketoisovalerate oxidoreductase subunit VorA (vorA) of Pyrococcus horikoshii (strain ATCC 700860 / DSM 12428 / JCM 9974 / NBRC 100139 / OT-3).